The primary structure comprises 139 residues: Large ribosomal subunit protein bL17 (139 aa).

This sequence belongs to the bacterial ribosomal protein bL17 family. In terms of assembly, part of the 50S ribosomal subunit. Contacts protein L32.

The protein is Large ribosomal subunit protein bL17 of Afipia carboxidovorans (strain ATCC 49405 / DSM 1227 / KCTC 32145 / OM5) (Oligotropha carboxidovorans).